The primary structure comprises 403 residues: Argininosuccinate synthase (403 aa).

ATP-binding positions include 12–20 and alanine 39; that span reads AYSGGLDTS. L-citrulline contacts are provided by tyrosine 90 and serine 95. Glycine 120 provides a ligand contact to ATP. Residues threonine 122, asparagine 126, and aspartate 127 each contribute to the L-aspartate site. Residue asparagine 126 participates in L-citrulline binding. L-citrulline is bound by residues arginine 130, serine 182, serine 191, glutamate 267, and tyrosine 279.

The protein belongs to the argininosuccinate synthase family. Type 1 subfamily. As to quaternary structure, homotetramer.

It is found in the cytoplasm. The catalysed reaction is L-citrulline + L-aspartate + ATP = 2-(N(omega)-L-arginino)succinate + AMP + diphosphate + H(+). Its pathway is amino-acid biosynthesis; L-arginine biosynthesis; L-arginine from L-ornithine and carbamoyl phosphate: step 2/3. In Ruthia magnifica subsp. Calyptogena magnifica, this protein is Argininosuccinate synthase.